Here is a 480-residue protein sequence, read N- to C-terminus: Porphobilinogen deaminase, chloroplastic (480 aa).

The N-terminal 139 residues, 1-139, are a transit peptide targeting the chloroplast; that stretch reads MYCGRYETIG…VSGGRIWSLA (139 aa). Position 395 is an S-(dipyrrolylmethanemethyl)cysteine (Cys395).

The protein belongs to the HMBS family. Dipyrromethane is required as a cofactor.

The protein localises to the plastid. The protein resides in the chloroplast. It carries out the reaction 4 porphobilinogen + H2O = hydroxymethylbilane + 4 NH4(+). Its pathway is porphyrin-containing compound metabolism; protoporphyrin-IX biosynthesis; coproporphyrinogen-III from 5-aminolevulinate: step 2/4. It participates in porphyrin-containing compound metabolism; chlorophyll biosynthesis. In terms of biological role, tetrapolymerization of the monopyrrole PBG into the hydroxymethylbilane pre-uroporphyrinogen in several discrete steps. The protein is Porphobilinogen deaminase, chloroplastic of Euglena gracilis.